Reading from the N-terminus, the 184-residue chain is Glutathione-regulated potassium-efflux system ancillary protein KefG (184 aa).

Belongs to the NAD(P)H dehydrogenase (quinone) family. KefG subfamily. In terms of assembly, interacts with KefB.

The protein localises to the cell inner membrane. The catalysed reaction is a quinone + NADH + H(+) = a quinol + NAD(+). The enzyme catalyses a quinone + NADPH + H(+) = a quinol + NADP(+). Functionally, regulatory subunit of a potassium efflux system that confers protection against electrophiles. Required for full activity of KefB. The chain is Glutathione-regulated potassium-efflux system ancillary protein KefG from Escherichia coli O1:K1 / APEC.